Consider the following 416-residue polypeptide: CinA-like protein (416 aa).

The protein belongs to the CinA family.

The protein is CinA-like protein of Thermosynechococcus vestitus (strain NIES-2133 / IAM M-273 / BP-1).